The chain runs to 343 residues: SUMO-activating enzyme subunit aos-1 (343 aa).

The protein belongs to the ubiquitin-activating E1 family. Heterodimer of aos-1 and uba-2.

It functions in the pathway protein modification; protein sumoylation. In terms of biological role, the dimeric enzyme acts as an E1 ligase for smo-1. It mediates ATP-dependent activation of smo-1 and formation of a thioester with a conserved cysteine residue on uba-2. This is SUMO-activating enzyme subunit aos-1 (aos-1) from Caenorhabditis elegans.